Reading from the N-terminus, the 249-residue chain is Purine nucleoside phosphorylase ML0918 (249 aa).

Residues His72, Cys109, and His126 each contribute to the Zn(2+) site.

Belongs to the purine nucleoside phosphorylase YfiH/LACC1 family. Homodimer. Requires Cu(2+) as cofactor. It depends on Zn(2+) as a cofactor.

It catalyses the reaction adenosine + phosphate = alpha-D-ribose 1-phosphate + adenine. The catalysed reaction is S-methyl-5'-thioadenosine + phosphate = 5-(methylsulfanyl)-alpha-D-ribose 1-phosphate + adenine. It carries out the reaction inosine + phosphate = alpha-D-ribose 1-phosphate + hypoxanthine. The enzyme catalyses adenosine + H2O + H(+) = inosine + NH4(+). Its function is as follows. Purine nucleoside enzyme that catalyzes the phosphorolysis of adenosine and inosine nucleosides, yielding D-ribose 1-phosphate and the respective free bases, adenine and hypoxanthine. Also catalyzes the phosphorolysis of S-methyl-5'-thioadenosine into adenine and S-methyl-5-thio-alpha-D-ribose 1-phosphate. Also has adenosine deaminase activity. The sequence is that of Purine nucleoside phosphorylase ML0918 from Mycobacterium leprae (strain TN).